Consider the following 280-residue polypeptide: DCN1-like protein 4 (280 aa).

Positions 37-71 (GPESHGTACCSRAMPPRKKRRPTAGDDLSAKKSRQ) are disordered. Residues 89-275 (FSSKRCLEWF…LLDEFVEWYK (187 aa)) enclose the DCUN1 domain.

In terms of assembly, may interact (via the DCUN1 domain) with unneddylated cullins.

The protein resides in the nucleus. Its function is as follows. Contributes to the neddylation of all cullins by transferring NEDD8 from N-terminally acetylated NEDD8-conjugating E2s enzyme to different cullin C-terminal domain-RBX complexes. The chain is DCN1-like protein 4 from Danio rerio (Zebrafish).